We begin with the raw amino-acid sequence, 98 residues long: Putative septation protein SpoVG (98 aa).

Belongs to the SpoVG family.

In terms of biological role, essential for sporulation. Interferes with or is a negative regulator of the pathway leading to asymmetric septation. The chain is Putative septation protein SpoVG from Bacillus pumilus (strain SAFR-032).